A 177-amino-acid chain; its full sequence is Probable phospholipid hydroperoxide glutathione peroxidase (177 aa).

C42 is an active-site residue.

The protein belongs to the glutathione peroxidase family.

It localises to the cytoplasm. It catalyses the reaction a hydroperoxy polyunsaturated fatty acid + 2 glutathione = a hydroxy polyunsaturated fatty acid + glutathione disulfide + H2O. In terms of biological role, protects cells and enzymes from oxidative damage, by catalyzing the reduction of hydrogen peroxide, lipid peroxides and organic hydroperoxide, by glutathione. In Encephalitozoon cuniculi (strain GB-M1) (Microsporidian parasite), this protein is Probable phospholipid hydroperoxide glutathione peroxidase.